A 267-amino-acid chain; its full sequence is Triosephosphate isomerase (267 aa).

Residue 12-14 (NWK) participates in substrate binding. Catalysis depends on histidine 104, which acts as the Electrophile. Glutamate 176 functions as the Proton acceptor in the catalytic mechanism. Residues glycine 182, serine 222, and 243 to 244 (GG) each bind substrate.

It belongs to the triosephosphate isomerase family. In terms of assembly, homodimer.

Its subcellular location is the cytoplasm. It catalyses the reaction D-glyceraldehyde 3-phosphate = dihydroxyacetone phosphate. It functions in the pathway carbohydrate biosynthesis; gluconeogenesis. The protein operates within carbohydrate degradation; glycolysis; D-glyceraldehyde 3-phosphate from glycerone phosphate: step 1/1. In terms of biological role, involved in the gluconeogenesis. Catalyzes stereospecifically the conversion of dihydroxyacetone phosphate (DHAP) to D-glyceraldehyde-3-phosphate (G3P). The protein is Triosephosphate isomerase of Bifidobacterium longum (strain DJO10A).